The following is a 176-amino-acid chain: Large ribosomal subunit protein uL10 (176 aa).

It belongs to the universal ribosomal protein uL10 family. As to quaternary structure, part of the ribosomal stalk of the 50S ribosomal subunit. The N-terminus interacts with L11 and the large rRNA to form the base of the stalk. The C-terminus forms an elongated spine to which L12 dimers bind in a sequential fashion forming a multimeric L10(L12)X complex.

Forms part of the ribosomal stalk, playing a central role in the interaction of the ribosome with GTP-bound translation factors. This Streptomyces coelicolor (strain ATCC BAA-471 / A3(2) / M145) protein is Large ribosomal subunit protein uL10 (rplJ).